The chain runs to 123 residues: Histone H2B.1, embryonic (123 aa).

Positions 1–32 are disordered; sequence MAPTGQVAKKGSKKAVKPPRASGGKKRHRKRK. Positions 10-32 are enriched in basic residues; it reads KGSKKAVKPPRASGGKKRHRKRK. O-linked (GlcNAc) serine glycosylation is present at serine 110. Lysine 118 participates in a covalent cross-link: Glycyl lysine isopeptide (Lys-Gly) (interchain with G-Cter in ubiquitin).

Belongs to the histone H2B family. The nucleosome is a histone octamer containing two molecules each of H2A, H2B, H3 and H4 assembled in one H3-H4 heterotetramer and two H2A-H2B heterodimers. The octamer wraps approximately 147 bp of DNA. Post-translationally, monoubiquitination of Lys-118 gives a specific tag for epigenetic transcriptional activation and is also prerequisite for histone H3 'Lys-4' and 'Lys-79' methylation. In terms of processing, glcNAcylation at Ser-110 promotes monoubiquitination of Lys-118. It fluctuates in response to extracellular glucose, and associates with transcribed genes.

The protein localises to the nucleus. It is found in the chromosome. Its function is as follows. Core component of nucleosome. Nucleosomes wrap and compact DNA into chromatin, limiting DNA accessibility to the cellular machineries which require DNA as a template. Histones thereby play a central role in transcription regulation, DNA repair, DNA replication and chromosomal stability. DNA accessibility is regulated via a complex set of post-translational modifications of histones, also called histone code, and nucleosome remodeling. The polypeptide is Histone H2B.1, embryonic (Psammechinus miliaris (Green sea urchin)).